Consider the following 315-residue polypeptide: Ribosomal RNA small subunit methyltransferase H (315 aa).

Residues 42–44, aspartate 59, phenylalanine 96, aspartate 108, and glutamine 115 each bind S-adenosyl-L-methionine; that span reads GGH.

It belongs to the methyltransferase superfamily. RsmH family.

The protein resides in the cytoplasm. The catalysed reaction is cytidine(1402) in 16S rRNA + S-adenosyl-L-methionine = N(4)-methylcytidine(1402) in 16S rRNA + S-adenosyl-L-homocysteine + H(+). In terms of biological role, specifically methylates the N4 position of cytidine in position 1402 (C1402) of 16S rRNA. In Gemmatimonas aurantiaca (strain DSM 14586 / JCM 11422 / NBRC 100505 / T-27), this protein is Ribosomal RNA small subunit methyltransferase H.